A 148-amino-acid polypeptide reads, in one-letter code: 3-dehydroquinate dehydratase (148 aa).

Residue Tyr23 is the Proton acceptor of the active site. The substrate site is built by Asn75, His81, and Asp88. His101 (proton donor) is an active-site residue. Residues 102 to 103 and Arg112 contribute to the substrate site; that span reads LS.

The protein belongs to the type-II 3-dehydroquinase family. As to quaternary structure, homododecamer.

The enzyme catalyses 3-dehydroquinate = 3-dehydroshikimate + H2O. The protein operates within metabolic intermediate biosynthesis; chorismate biosynthesis; chorismate from D-erythrose 4-phosphate and phosphoenolpyruvate: step 3/7. Functionally, catalyzes a trans-dehydration via an enolate intermediate. The polypeptide is 3-dehydroquinate dehydratase (Cellvibrio japonicus (strain Ueda107) (Pseudomonas fluorescens subsp. cellulosa)).